Consider the following 944-residue polypeptide: Isoleucine--tRNA ligase (944 aa).

The 'HIGH' region motif lies at 58-68; it reads PYANGQIHIGH. Position 568 (Glu-568) interacts with L-isoleucyl-5'-AMP. The 'KMSKS' region motif lies at 609–613; sequence KMSKS. ATP is bound at residue Lys-612. Zn(2+) contacts are provided by Cys-907, Cys-910, Cys-927, and Cys-930.

It belongs to the class-I aminoacyl-tRNA synthetase family. IleS type 1 subfamily. In terms of assembly, monomer. The cofactor is Zn(2+).

It is found in the cytoplasm. It carries out the reaction tRNA(Ile) + L-isoleucine + ATP = L-isoleucyl-tRNA(Ile) + AMP + diphosphate. Its function is as follows. Catalyzes the attachment of isoleucine to tRNA(Ile). As IleRS can inadvertently accommodate and process structurally similar amino acids such as valine, to avoid such errors it has two additional distinct tRNA(Ile)-dependent editing activities. One activity is designated as 'pretransfer' editing and involves the hydrolysis of activated Val-AMP. The other activity is designated 'posttransfer' editing and involves deacylation of mischarged Val-tRNA(Ile). The polypeptide is Isoleucine--tRNA ligase (Idiomarina loihiensis (strain ATCC BAA-735 / DSM 15497 / L2-TR)).